Consider the following 1038-residue polypeptide: Dorsal-ventral patterning protein Sog (1038 aa).

Residues 1–53 lie on the Cytoplasmic side of the membrane; that stretch reads MANKLRKSNAIEWATATGTVPLLERSCCHSEDAALEPQASKTSHREQAPILRH. A helical; Signal-anchor for type II membrane protein membrane pass occupies residues 54 to 74; that stretch reads LSQLSHLLIIAGLLIVCLAGV. At 75-1038 the chain is on the extracellular side; it reads TEGRRHAPLM…QPHHQQRSSS (964 aa). The region spanning 100–175 is the VWFC 1 domain; it reads TECQFGKVLR…LPGKCCKTCP (76 aa). N-linked (GlcNAc...) asparagine glycosylation is found at Asn179 and Asn287. CHRD domains lie at 197-337, 339-471, 474-588, and 592-713; these read NMKH…KYTA, QTEL…TRAS, IFQT…PRPV, and RDSA…STKV. N-linked (GlcNAc...) asparagine glycans are attached at residues Asn520, Asn666, Asn752, and Asn821. In terms of domain architecture, VWFC 2 spans 742-804; sequence TKCFHSGRFY…RDGECCPSCV (63 aa). VWFC domains are found at residues 830 to 899 and 939 to 1020; these read RGCR…KICP and GGCK…TQCR.

It belongs to the chordin family. As to quaternary structure, component of a complex composed of dpp, sog and tsg. Interacts with palmitoyltransferase Hip14. In terms of processing, palmitoylated, probably by Hip14. Post-translationally, cleaved by metalloproteases tok and tld. Cleavage by tok during pupal development contributes to specification of the posterior crossvein in the wing. Abuts the dorsal dpp-expressing cells in a lateral stripe 14-16 cells wide. Later in embryogenesis it is expressed in neuroectoderm and in the endoderm spaced along the anterior-posterior axis of the developing gut.

The protein localises to the golgi apparatus membrane. It localises to the cell membrane. Its subcellular location is the secreted. Putative negative growth factor. Antagonist of dpp, a protein involved in patterning the dorsal region and in the development of the neuroectoderm; dpp inhibition is enhanced by tsg. Required for establishment of a narrow stripe of peak levels of BMP signaling in the dorsal midline of early embryos, that will give rise to the amnioserosa. During pupal development, plays a role in specification of the posterior crossvein in the wing. Exhibits both agonist and antagonist activities towards BMP signaling during pupal wing patterning. In Drosophila melanogaster (Fruit fly), this protein is Dorsal-ventral patterning protein Sog (sog).